Consider the following 31-residue polypeptide: DIFCGETCAFIPCITHVPGTCSCKSKVCYFN.

Positions 1-31 (DIFCGETCAFIPCITHVPGTCSCKSKVCYFN) form a cross-link, cyclopeptide (Asp-Asn). 3 disulfide bridges follow: C4–C21, C8–C23, and C13–C28.

This is a cyclic peptide. As to expression, expressed in roots and runners but not in leaves, petals and petioles (at protein level).

Its function is as follows. Probably participates in a plant defense mechanism. This is Cycloviolacin-O25 from Viola odorata (Sweet violet).